The chain runs to 166 residues: 3-dehydroquinate dehydratase (166 aa).

Tyr22 serves as the catalytic Proton acceptor. Asn73, His79, and Asp86 together coordinate substrate. The active-site Proton donor is the His99. Substrate is bound by residues Ile100–Thr101 and Arg110.

It belongs to the type-II 3-dehydroquinase family. In terms of assembly, homododecamer.

It carries out the reaction 3-dehydroquinate = 3-dehydroshikimate + H2O. Its pathway is metabolic intermediate biosynthesis; chorismate biosynthesis; chorismate from D-erythrose 4-phosphate and phosphoenolpyruvate: step 3/7. Catalyzes a trans-dehydration via an enolate intermediate. The protein is 3-dehydroquinate dehydratase of Wolinella succinogenes (strain ATCC 29543 / DSM 1740 / CCUG 13145 / JCM 31913 / LMG 7466 / NCTC 11488 / FDC 602W) (Vibrio succinogenes).